A 395-amino-acid chain; its full sequence is Flap endonuclease 1 (395 aa).

An N-domain region spans residues 1-104 (MGIKHLYQVI…GELAKRVARK (104 aa)). Position 34 (aspartate 34) interacts with Mg(2+). DNA is bound by residues arginine 47 and arginine 70. Mg(2+) is bound by residues aspartate 86, glutamate 158, glutamate 160, aspartate 179, and aspartate 181. Residues 122–253 (DIEKFSRRTV…TTALSLIKEH (132 aa)) form an I-domain region. Glutamate 158 is a DNA binding site. Glycine 231 and aspartate 233 together coordinate DNA. Aspartate 233 is a binding site for Mg(2+). Residues 341–349 (QQSRLEGFF) form an interaction with PCNA region. Residues 345 to 395 (LEGFFKPVARTEDEKASLKRKHDEKLQQQKKKKKEDAKAKKEAKAKPRGAA) form a disordered region. 2 stretches are compositionally biased toward basic and acidic residues: residues 353–371 (ARTEDEKASLKRKHDEKLQ) and 378–389 (KEDAKAKKEAKA).

This sequence belongs to the XPG/RAD2 endonuclease family. FEN1 subfamily. In terms of assembly, interacts with PCNA. Three molecules of fen1 bind to one PCNA trimer with each molecule binding to one PCNA monomer. PCNA stimulates the nuclease activity without altering cleavage specificity. Mg(2+) is required as a cofactor. Post-translationally, phosphorylated. Phosphorylation upon DNA damage induces relocalization to the nuclear plasma.

Its subcellular location is the nucleus. It is found in the nucleolus. It localises to the nucleoplasm. The protein localises to the mitochondrion. Its function is as follows. Structure-specific nuclease with 5'-flap endonuclease and 5'-3' exonuclease activities involved in DNA replication and repair. During DNA replication, cleaves the 5'-overhanging flap structure that is generated by displacement synthesis when DNA polymerase encounters the 5'-end of a downstream Okazaki fragment. It enters the flap from the 5'-end and then tracks to cleave the flap base, leaving a nick for ligation. Also involved in the long patch base excision repair (LP-BER) pathway, by cleaving within the apurinic/apyrimidinic (AP) site-terminated flap. Acts as a genome stabilization factor that prevents flaps from equilibrating into structures that lead to duplications and deletions. Also possesses 5'-3' exonuclease activity on nicked or gapped double-stranded DNA, and exhibits RNase H activity. Also involved in replication and repair of rDNA and in repairing mitochondrial DNA. This Penicillium rubens (strain ATCC 28089 / DSM 1075 / NRRL 1951 / Wisconsin 54-1255) (Penicillium chrysogenum) protein is Flap endonuclease 1 (fen1).